Reading from the N-terminus, the 444-residue chain is Zinc protease PqqE (444 aa).

A signal peptide spans 1 to 28 (MKHFSVKRLLGLSSVLLVTLGASMHAQS). Histidine 78 contributes to the Zn(2+) binding site. The active-site Proton acceptor is glutamate 81. Positions 82 and 158 each coordinate Zn(2+).

It belongs to the peptidase M16 family. Zn(2+) is required as a cofactor.

Its subcellular location is the secreted. Can function alone, but full activity requires the presence of the non-peptidase homolog YmxG. In terms of biological role, virulence factor that cleaves the cytoplasmic domain of the human junctional adhesion molecule A (JAM-A), compromising gastric epithelial barrier function and cell-cell adhesion. Cleavage of JAM-A occurs after Ala-285 or, to a lesser extent, before Ala-285. The protein is Zinc protease PqqE of Helicobacter pylori (strain ATCC 700392 / 26695) (Campylobacter pylori).